The sequence spans 217 residues: Adenylate kinase (217 aa).

10–15 (GAGKGT) contacts ATP. Residues 30–59 (STGDIFRSNIKNGTELGRKAKEYIDKGLLV) are NMP. AMP is bound by residues Thr-31, Arg-36, 57-59 (LLV), 85-88 (GFPR), and Gln-92. The LID stretch occupies residues 126-163 (GRRVCSKCGMSYHIVYNQPKVENICDSCNGELIQRDDD). Arg-127 provides a ligand contact to ATP. Zn(2+) is bound by residues Cys-130 and Cys-133. 136–137 (SY) provides a ligand contact to ATP. 2 residues coordinate Zn(2+): Cys-150 and Cys-153. The AMP site is built by Arg-160 and Arg-171. Glu-199 contributes to the ATP binding site.

The protein belongs to the adenylate kinase family. As to quaternary structure, monomer.

The protein resides in the cytoplasm. It carries out the reaction AMP + ATP = 2 ADP. Its pathway is purine metabolism; AMP biosynthesis via salvage pathway; AMP from ADP: step 1/1. In terms of biological role, catalyzes the reversible transfer of the terminal phosphate group between ATP and AMP. Plays an important role in cellular energy homeostasis and in adenine nucleotide metabolism. The protein is Adenylate kinase of Acetivibrio thermocellus (strain ATCC 27405 / DSM 1237 / JCM 9322 / NBRC 103400 / NCIMB 10682 / NRRL B-4536 / VPI 7372) (Clostridium thermocellum).